A 416-amino-acid chain; its full sequence is Methylthioribose-1-phosphate isomerase (416 aa).

The Proton donor role is filled by D280.

This sequence belongs to the eIF-2B alpha/beta/delta subunits family. MtnA subfamily.

Its subcellular location is the cytoplasm. The protein resides in the nucleus. It catalyses the reaction 5-(methylsulfanyl)-alpha-D-ribose 1-phosphate = 5-(methylsulfanyl)-D-ribulose 1-phosphate. Its pathway is amino-acid biosynthesis; L-methionine biosynthesis via salvage pathway; L-methionine from S-methyl-5-thio-alpha-D-ribose 1-phosphate: step 1/6. Catalyzes the interconversion of methylthioribose-1-phosphate (MTR-1-P) into methylthioribulose-1-phosphate (MTRu-1-P). In Candida albicans (strain SC5314 / ATCC MYA-2876) (Yeast), this protein is Methylthioribose-1-phosphate isomerase.